The primary structure comprises 337 residues: Vacuolar protein sorting-associated protein 26B-B (337 aa).

The segment at 313 to 337 is disordered; the sequence is RFEGTSHPETRPQHSGAAALEQEHE.

This sequence belongs to the VPS26 family. As to quaternary structure, component of the heterotrimeric retromer cargo-selective complex (CSC) which is believed to associate with variable sorting nexins to form functionally distinct retromer complex variants.

Its subcellular location is the cytoplasm. It is found in the membrane. It localises to the endosome. Acts as a component of the retromer cargo-selective complex (CSC). The CSC is believed to be the core functional component of retromer or respective retromer complex variants acting to prevent missorting of selected transmembrane cargo proteins into the lysosomal degradation pathway. Retromer mediates retrograde transport of cargo proteins from endosomes to the trans-Golgi network (TGN). In Xenopus laevis (African clawed frog), this protein is Vacuolar protein sorting-associated protein 26B-B (vps26b-b).